We begin with the raw amino-acid sequence, 331 residues long: Aldo-keto reductase YhdN (331 aa).

NADP(+) contacts are provided by residues 20 to 21 (TW) and Asp-52. Tyr-57 acts as the Proton donor in catalysis. Residues Gln-175, 203-208 (YGSLCR), Lys-214, Arg-227, 280-282 (GAR), and Gln-286 each bind NADP(+).

The protein belongs to the aldo/keto reductase family. Aldo/keto reductase 11 subfamily. Monomer.

Aldo-keto reductase (AKR) that displays broad substrate specificity in vitro. Is able to reduce the standard AKR substrates DL-glyceraldehyde, D-erythrose, methylglyoxal, p-nitrobenzaldehyde, benzaldehyde and butyraldehyde, in the presence of NADPH. Cannot use NADH as a cosubstrate. Does not act on glucose, 2-pyridine carboxyaldehyde, fructose and xylose. The physiological function of this enzyme is not clear. May play a role in bacterial stress response and/or in detoxification of reactive aldehydes. The chain is Aldo-keto reductase YhdN (yhdN) from Bacillus subtilis (strain 168).